We begin with the raw amino-acid sequence, 388 residues long: Succinyl-diaminopimelate desuccinylase (388 aa).

His75 contacts Zn(2+). The active site involves Asp77. Zn(2+) is bound at residue Asp108. Glu142 acts as the Proton acceptor in catalysis. Glu143, Glu171, and His361 together coordinate Zn(2+).

This sequence belongs to the peptidase M20A family. DapE subfamily. Homodimer. It depends on Zn(2+) as a cofactor. The cofactor is Co(2+).

The catalysed reaction is N-succinyl-(2S,6S)-2,6-diaminopimelate + H2O = (2S,6S)-2,6-diaminopimelate + succinate. The protein operates within amino-acid biosynthesis; L-lysine biosynthesis via DAP pathway; LL-2,6-diaminopimelate from (S)-tetrahydrodipicolinate (succinylase route): step 3/3. Catalyzes the hydrolysis of N-succinyl-L,L-diaminopimelic acid (SDAP), forming succinate and LL-2,6-diaminopimelate (DAP), an intermediate involved in the bacterial biosynthesis of lysine and meso-diaminopimelic acid, an essential component of bacterial cell walls. This chain is Succinyl-diaminopimelate desuccinylase, found in Methylocella silvestris (strain DSM 15510 / CIP 108128 / LMG 27833 / NCIMB 13906 / BL2).